The primary structure comprises 68 residues: Large ribosomal subunit protein uL29 (68 aa).

It belongs to the universal ribosomal protein uL29 family.

This is Large ribosomal subunit protein uL29 from Streptococcus uberis (strain ATCC BAA-854 / 0140J).